Here is a 203-residue protein sequence, read N- to C-terminus: Small ribosomal subunit protein uS4 (203 aa).

The 61-residue stretch at 93–153 (RRLDNIVYRL…DKSKNLQQVK (61 aa)) folds into the S4 RNA-binding domain.

This sequence belongs to the universal ribosomal protein uS4 family. In terms of assembly, part of the 30S ribosomal subunit. Contacts protein S5. The interaction surface between S4 and S5 is involved in control of translational fidelity.

Its function is as follows. One of the primary rRNA binding proteins, it binds directly to 16S rRNA where it nucleates assembly of the body of the 30S subunit. With S5 and S12 plays an important role in translational accuracy. This Lactobacillus gasseri (strain ATCC 33323 / DSM 20243 / BCRC 14619 / CIP 102991 / JCM 1131 / KCTC 3163 / NCIMB 11718 / NCTC 13722 / AM63) protein is Small ribosomal subunit protein uS4.